Consider the following 119-residue polypeptide: Holo-[acyl-carrier-protein] synthase (119 aa).

Mg(2+) is bound by residues Asp-8 and Glu-59.

Belongs to the P-Pant transferase superfamily. AcpS family. The cofactor is Mg(2+).

It is found in the cytoplasm. It catalyses the reaction apo-[ACP] + CoA = holo-[ACP] + adenosine 3',5'-bisphosphate + H(+). Its function is as follows. Transfers the 4'-phosphopantetheine moiety from coenzyme A to a Ser of acyl-carrier-protein. In Streptococcus agalactiae serotype Ia (strain ATCC 27591 / A909 / CDC SS700), this protein is Holo-[acyl-carrier-protein] synthase.